Reading from the N-terminus, the 569-residue chain is Proline--tRNA ligase (569 aa).

This sequence belongs to the class-II aminoacyl-tRNA synthetase family. ProS type 1 subfamily. Homodimer.

It localises to the cytoplasm. The enzyme catalyses tRNA(Pro) + L-proline + ATP = L-prolyl-tRNA(Pro) + AMP + diphosphate. Its function is as follows. Catalyzes the attachment of proline to tRNA(Pro) in a two-step reaction: proline is first activated by ATP to form Pro-AMP and then transferred to the acceptor end of tRNA(Pro). As ProRS can inadvertently accommodate and process non-cognate amino acids such as alanine and cysteine, to avoid such errors it has two additional distinct editing activities against alanine. One activity is designated as 'pretransfer' editing and involves the tRNA(Pro)-independent hydrolysis of activated Ala-AMP. The other activity is designated 'posttransfer' editing and involves deacylation of mischarged Ala-tRNA(Pro). The misacylated Cys-tRNA(Pro) is not edited by ProRS. This chain is Proline--tRNA ligase, found in Colwellia psychrerythraea (strain 34H / ATCC BAA-681) (Vibrio psychroerythus).